We begin with the raw amino-acid sequence, 259 residues long: MKDVQSEKDTREIPLKHVGIKKLKYPVQVLDRENKVQNTVADINMYVDLPKDFRGTHMSRFLEVFNKFHLKIDPKTIKKILDDLKQTLKAQSAKIEIMFPYFLKKKAPVTKIESYMEYLCGFSAYDGPQKCEFYTIVEVSVQTLCPCSKEISKYNAHNQRANVRIEVETSELVWFEELIEIAEDSASVPLFSLLKRPDEKFVTEKAYENPKFVEDVARDIAIRLKDNPKINWFKVEVESYESIHNHNAFACVDSTIMEV.

Belongs to the GTP cyclohydrolase IV family.

The enzyme catalyses GTP + H2O = 7,8-dihydroneopterin 3'-triphosphate + formate + H(+). Its pathway is cofactor biosynthesis; 7,8-dihydroneopterin triphosphate biosynthesis; 7,8-dihydroneopterin triphosphate from GTP: step 1/1. Its function is as follows. Converts GTP to 7,8-dihydroneopterin triphosphate. In Thermosipho melanesiensis (strain DSM 12029 / CIP 104789 / BI429), this protein is GTP cyclohydrolase FolE2.